The sequence spans 40 residues: MSAEALADPKADPLAGPNPDADPEAINLKAIAALAKKLLG.

Residues 1-7 form the signal peptide; sequence MSAEALA. Residues 1–22 are disordered; it reads MSAEALADPKADPLAGPNPDAD. 4 AXPX repeats span residues 7–10, 11–14, 15–18, and 19–22; these read ADPK, ADPL, AGPN, and PDAD. Positions 8–25 are excised as a propeptide; that stretch reads DPKADPLAGPNPDADPEA. Leucine amide is present on Leu-39.

The protein belongs to the MCD family. Mastoparan subfamily. As to expression, expressed by the venom gland.

Its subcellular location is the secreted. Shows mast cell degranulation and antimicrobial activities against the Gram-negative bacteria E.coli ATCC 25922 (MIC=6.0 ug/ml), the Gram-positive bacteria S.aureus ATCC 2592 (MIC=3.0 ug/ml) and the fungus C.albicans ATCC 2002 (MIC=12 ug/ml). Exhibits little hemolytic activity against washed human erythrocytes. Its mast cell degranulation activity may be related to the activation of G-protein coupled receptors in mast cells as well as interaction with other proteins located in cell endosomal membranes in the mast cells. This chain is Mastoparan-like peptide 12c, found in Vespa magnifica (Hornet).